Consider the following 428-residue polypeptide: Cell division protein DamX (428 aa).

The tract at residues 1–99 (MDEFKPEDEL…KRKKAASKPA (99 aa)) is disordered. Residues 1-103 (MDEFKPEDEL…AASKPASRQY (103 aa)) lie on the Cytoplasmic side of the membrane. Composition is skewed to basic and acidic residues over residues 7–36 (EDELKPDPSDRRTGRSRQSSERSERTERGE) and 50–64 (DDRRPTRAQKERNEE). A coiled-coil region spans residues 55-87 (TRAQKERNEEPEIEEEIDESEDETVDEERVERR). Residues 65 to 82 (PEIEEEIDESEDETVDEE) show a composition bias toward acidic residues. The span at 86–95 (RRPRKRKKAA) shows a compositional bias: basic residues. A helical membrane pass occupies residues 104-124 (MMMGVGILVLLLLIIGIGSAL). Over 125–428 (KAPSTTSSDQ…PLRQVQADLK (304 aa)) the chain is Periplasmic. Disordered regions lie at residues 149 to 190 (TDQA…VATD) and 226 to 344 (EPAT…KSAP). A compositionally biased stretch (polar residues) spans 236-257 (GNASRDTAKTQTAERPSTTRPA). Positions 288–334 (PAAPVASTKAPAATSTPAPKETATTAPVQTASPAQTTATPAAGAKTA) are enriched in low complexity. The SPOR domain maps to 342–419 (SAPSSHYTLQ…VQAKNPWAKP (78 aa)).

Belongs to the DamX family. Interacts in vitro with multiple Fts proteins, including FtsQ and FtsN.

The protein resides in the cell inner membrane. Functionally, non-essential cell division protein. This Escherichia coli (strain K12) protein is Cell division protein DamX.